Consider the following 163-residue polypeptide: Nucleotide-binding protein NFA_51200 (163 aa).

Belongs to the YajQ family.

Nucleotide-binding protein. The protein is Nucleotide-binding protein NFA_51200 of Nocardia farcinica (strain IFM 10152).